Here is a 194-residue protein sequence, read N- to C-terminus: Imidazoleglycerol-phosphate dehydratase (194 aa).

It belongs to the imidazoleglycerol-phosphate dehydratase family.

The protein resides in the cytoplasm. The enzyme catalyses D-erythro-1-(imidazol-4-yl)glycerol 3-phosphate = 3-(imidazol-4-yl)-2-oxopropyl phosphate + H2O. The protein operates within amino-acid biosynthesis; L-histidine biosynthesis; L-histidine from 5-phospho-alpha-D-ribose 1-diphosphate: step 6/9. The polypeptide is Imidazoleglycerol-phosphate dehydratase (Streptococcus mutans serotype c (strain ATCC 700610 / UA159)).